A 547-amino-acid chain; its full sequence is Glucose-6-phosphate isomerase 2 (547 aa).

Glu351 serves as the catalytic Proton donor. Residues His382 and Lys508 contribute to the active site.

This sequence belongs to the GPI family.

The protein resides in the cytoplasm. It catalyses the reaction alpha-D-glucose 6-phosphate = beta-D-fructose 6-phosphate. It participates in carbohydrate biosynthesis; gluconeogenesis. The protein operates within carbohydrate degradation; glycolysis; D-glyceraldehyde 3-phosphate and glycerone phosphate from D-glucose: step 2/4. Its function is as follows. Catalyzes the reversible isomerization of glucose-6-phosphate to fructose-6-phosphate. This Neisseria meningitidis serogroup B (strain ATCC BAA-335 / MC58) protein is Glucose-6-phosphate isomerase 2.